Here is a 415-residue protein sequence, read N- to C-terminus: MKNKYYPLRSSMDEMSAKNDNEIDLEKGPLPEYNSEDGSTLPPYSDLNNPKQMGQNITKLFNWNKSTTPPDYDENRLHITDEGNNPPNTHRENHSSGTADNSSPFLIKLLISFTPIVLLNAPAVCYLKYKDAFFKNYGAAEWTLFGFWCLVCTLALIFLTYFYETWTKAVKVTVIFLAQCVKVTVIFLAKCVKVTVIFLAKCVKVTAISLAKCIKVTAIFLAQCVKVTAVGLYNSREKWVVIIWLLWVVICYTLFLRSKFGNLNLNKALICSTCSISAALLLFLLYVRLPFWTLKHMFSGLFQVLGVQSCVVIVTKGLTYLFDKHIDATGYEIEASSLFVIGNFLFFYEMECPGALKRMPKFIRNGIASFLEGIGNIGNAIGRIGNAIGRIGNAFRGANDNNDIPLGEMEVESEV.

Disordered stretches follow at residues 1–49 (MKNK…DLNN) and 67–99 (TTPP…SGTA). Residues 11 to 29 (SMDEMSAKNDNEIDLEKGP) show a composition bias toward basic and acidic residues. 7 helical membrane passes run 105–125 (FLIK…PAVC), 142–162 (WTLF…LTYF), 169–189 (AVKV…IFLA), 205–225 (VTAI…AQCV), 240–260 (VVII…RSKF), 274–294 (CSIS…FWTL), and 298–318 (FSGL…TKGL).

It belongs to the WTF family. As to quaternary structure, homomer. Forms protein aggregates. The two isoforms can interact with each other and with themselves. High sequence similarity is required for their interaction.

The protein resides in the spore membrane. It is found in the vacuole membrane. It localises to the ascus epiplasm. The protein localises to the cytoplasm. Its subcellular location is the endoplasmic reticulum membrane. Promotes unequal transmission of alleles from the parental zygote to progeny spores by acting as poison/antidote system where the poison and antidote proteins are produced from the same locus; the poison component is trans-acting and targets all spores within an ascus whereas the antidote component is spore-specific, leading to poisoning of all progeny that do not inherit the allele. In terms of biological role, localizes isoform 2 to the vacuole thereby facilitating its degradation. Functionally, forms toxic aggregates that disrupt spore maturation. The polypeptide is Meiotic driver wtf36 (Schizosaccharomyces pombe (Fission yeast)).